The chain runs to 525 residues: Phosphoenolpyruvate carboxykinase (ATP) (525 aa).

Substrate contacts are provided by Arg-54, Tyr-190, and Lys-196. Residues Lys-196, His-215, and 231 to 239 (GLSGTGKTT) contribute to the ATP site. Lys-196 and His-215 together coordinate Mn(2+). Asp-252 serves as a coordination point for Mn(2+). Residues Glu-280, Arg-316, and Thr-441 each coordinate ATP. Arg-316 lines the substrate pocket.

The protein belongs to the phosphoenolpyruvate carboxykinase (ATP) family. It depends on Mn(2+) as a cofactor.

Its subcellular location is the cytoplasm. The enzyme catalyses oxaloacetate + ATP = phosphoenolpyruvate + ADP + CO2. Its pathway is carbohydrate biosynthesis; gluconeogenesis. Functionally, involved in the gluconeogenesis. Catalyzes the conversion of oxaloacetate (OAA) to phosphoenolpyruvate (PEP) through direct phosphoryl transfer between the nucleoside triphosphate and OAA. The protein is Phosphoenolpyruvate carboxykinase (ATP) of Nitratiruptor sp. (strain SB155-2).